The primary structure comprises 415 residues: YDG domain-containing protein At5g47160 (415 aa).

The disordered stretch occupies residues 163–186; it reads KKLSNASRLRANAHRPTQHKDERR. The YDG domain occupies 262-407; it reads GSVPGIKVGD…NILFKFKLRR (146 aa).

The protein resides in the nucleus. This is YDG domain-containing protein At5g47160 from Arabidopsis thaliana (Mouse-ear cress).